We begin with the raw amino-acid sequence, 299 residues long: MIHNNRLRIVMQKNWKLSSDSKDLLVRCGIKINLCKQKLIAFSENMPIDVMCVRDDDIPGLIMDGIVDIGIIGENVLEEEVLSRKLRLDSVDYIKLKRLDFGVCRLSLAVPIDKEYTDIYCLNNSRIATSYPHLLKKYFDKKNIIFKSCMLNGSVEVAPRAGLSDAICDLVSTGATLEANGLREVQIIFRSKACLICKTGNISVEKQNVINTLMTRIQGVIKARESKYIMLHAPIKKLEEVIDLLHGAERPTILKLAGDDSRVAMHMVSSETLFWETMEKLKLLGASSILVLPIEKMME.

The protein belongs to the ATP phosphoribosyltransferase family. Long subfamily. In terms of assembly, equilibrium between an active dimeric form, an inactive hexameric form and higher aggregates. Interconversion between the various forms is largely reversible and is influenced by the natural substrates and inhibitors of the enzyme. Requires Mg(2+) as cofactor.

The protein resides in the cytoplasm. The catalysed reaction is 1-(5-phospho-beta-D-ribosyl)-ATP + diphosphate = 5-phospho-alpha-D-ribose 1-diphosphate + ATP. Its pathway is amino-acid biosynthesis; L-histidine biosynthesis; L-histidine from 5-phospho-alpha-D-ribose 1-diphosphate: step 1/9. Feedback inhibited by histidine. In terms of biological role, catalyzes the condensation of ATP and 5-phosphoribose 1-diphosphate to form N'-(5'-phosphoribosyl)-ATP (PR-ATP). Has a crucial role in the pathway because the rate of histidine biosynthesis seems to be controlled primarily by regulation of HisG enzymatic activity. In Buchnera aphidicola subsp. Melaphis rhois, this protein is ATP phosphoribosyltransferase.